A 229-amino-acid chain; its full sequence is Cytidylate kinase (229 aa).

Residue 7–15 (GPAGAGKSS) coordinates ATP.

Belongs to the cytidylate kinase family. Type 1 subfamily.

It localises to the cytoplasm. It catalyses the reaction CMP + ATP = CDP + ADP. It carries out the reaction dCMP + ATP = dCDP + ADP. The sequence is that of Cytidylate kinase from Rhodopirellula baltica (strain DSM 10527 / NCIMB 13988 / SH1).